Reading from the N-terminus, the 679-residue chain is PHD finger protein PERSISTENT TAPETAL CELL 1 (679 aa).

The segment at 620-670 adopts a PHD-type zinc-finger fold; the sequence is VVDCACGAVDDDGERMACCDICEAWQHTRCAGIADTEDAPHVFLCSRCDND.

Its function is as follows. Probable transcriptional activator required for tapetal programmed cell death (PCD) and degeneration, and pollen development in anthers. This chain is PHD finger protein PERSISTENT TAPETAL CELL 1, found in Oryza sativa subsp. japonica (Rice).